We begin with the raw amino-acid sequence, 158 residues long: Transcription elongation factor GreA (158 aa).

Residues 45 to 72 (AEYHAAREQQSFIEGRIKQLEGELSHAE) are a coiled coil.

This sequence belongs to the GreA/GreB family.

Its function is as follows. Necessary for efficient RNA polymerase transcription elongation past template-encoded arresting sites. The arresting sites in DNA have the property of trapping a certain fraction of elongating RNA polymerases that pass through, resulting in locked ternary complexes. Cleavage of the nascent transcript by cleavage factors such as GreA or GreB allows the resumption of elongation from the new 3'terminus. GreA releases sequences of 2 to 3 nucleotides. The sequence is that of Transcription elongation factor GreA from Xylella fastidiosa (strain M23).